The following is a 441-amino-acid chain: Maltokinase (441 aa).

It belongs to the aminoglycoside phosphotransferase family. In terms of assembly, monomer.

It carries out the reaction D-maltose + ATP = alpha-maltose 1-phosphate + ADP + H(+). It participates in glycan biosynthesis; glycogen biosynthesis. Its function is as follows. Catalyzes the ATP-dependent phosphorylation of maltose to maltose 1-phosphate. Is involved in a branched alpha-glucan biosynthetic pathway from trehalose, together with TreS, GlgE and GlgB. The protein is Maltokinase (mak) of Mycolicibacterium vanbaalenii (strain DSM 7251 / JCM 13017 / BCRC 16820 / KCTC 9966 / NRRL B-24157 / PYR-1) (Mycobacterium vanbaalenii).